Here is a 208-residue protein sequence, read N- to C-terminus: Putative thymidylate kinase (208 aa).

The interval 12 to 19 (GIDGTGTS) is defective ATP-binding.

The protein belongs to the thymidylate kinase family.

It carries out the reaction dTMP + ATP = dTDP + ADP. In Treponema pallidum (strain Nichols), this protein is Putative thymidylate kinase (tmk).